The primary structure comprises 378 residues: Acetylornithine deacetylase (378 aa).

Histidine 76 provides a ligand contact to Zn(2+). The active site involves aspartate 78. A Zn(2+)-binding site is contributed by aspartate 108. Residue glutamate 140 is part of the active site. Zn(2+) contacts are provided by glutamate 141, glutamate 165, and histidine 351.

The protein belongs to the peptidase M20A family. ArgE subfamily. As to quaternary structure, homodimer. The cofactor is Zn(2+). Co(2+) serves as cofactor. Glutathione is required as a cofactor.

It localises to the cytoplasm. The catalysed reaction is N(2)-acetyl-L-ornithine + H2O = L-ornithine + acetate. It functions in the pathway amino-acid biosynthesis; L-arginine biosynthesis; L-ornithine from N(2)-acetyl-L-ornithine (linear): step 1/1. In terms of biological role, catalyzes the hydrolysis of the amide bond of N(2)-acetylated L-amino acids. Cleaves the acetyl group from N-acetyl-L-ornithine to form L-ornithine, an intermediate in L-arginine biosynthesis pathway, and a branchpoint in the synthesis of polyamines. In Aliivibrio fischeri (strain ATCC 700601 / ES114) (Vibrio fischeri), this protein is Acetylornithine deacetylase.